Reading from the N-terminus, the 340-residue chain is Ketol-acid reductoisomerase (NADP(+)) (340 aa).

The 183-residue stretch at 1–183 (MAITVYYDKD…GGGRTGIIET (183 aa)) folds into the KARI N-terminal Rossmann domain. Residues 26 to 29 (FGSQ), Arg49, Ser52, Ser54, and 84 to 87 (DEIQ) contribute to the NADP(+) site. Residue His109 is part of the active site. Gly135 lines the NADP(+) pocket. Residues 184–329 (TFKAETETDL…RNLRAMMPWI (146 aa)) enclose the KARI C-terminal knotted domain. Positions 192, 196, 228, and 232 each coordinate Mg(2+). A substrate-binding site is contributed by Ser253.

The protein belongs to the ketol-acid reductoisomerase family. Requires Mg(2+) as cofactor.

The catalysed reaction is (2R)-2,3-dihydroxy-3-methylbutanoate + NADP(+) = (2S)-2-acetolactate + NADPH + H(+). The enzyme catalyses (2R,3R)-2,3-dihydroxy-3-methylpentanoate + NADP(+) = (S)-2-ethyl-2-hydroxy-3-oxobutanoate + NADPH + H(+). It participates in amino-acid biosynthesis; L-isoleucine biosynthesis; L-isoleucine from 2-oxobutanoate: step 2/4. The protein operates within amino-acid biosynthesis; L-valine biosynthesis; L-valine from pyruvate: step 2/4. In terms of biological role, involved in the biosynthesis of branched-chain amino acids (BCAA). Catalyzes an alkyl-migration followed by a ketol-acid reduction of (S)-2-acetolactate (S2AL) to yield (R)-2,3-dihydroxy-isovalerate. In the isomerase reaction, S2AL is rearranged via a Mg-dependent methyl migration to produce 3-hydroxy-3-methyl-2-ketobutyrate (HMKB). In the reductase reaction, this 2-ketoacid undergoes a metal-dependent reduction by NADPH to yield (R)-2,3-dihydroxy-isovalerate. In Campylobacter jejuni subsp. doylei (strain ATCC BAA-1458 / RM4099 / 269.97), this protein is Ketol-acid reductoisomerase (NADP(+)).